Consider the following 95-residue polypeptide: Small ribosomal subunit protein uS19 (95 aa).

Belongs to the universal ribosomal protein uS19 family.

Protein S19 forms a complex with S13 that binds strongly to the 16S ribosomal RNA. This Thermosipho africanus (strain TCF52B) protein is Small ribosomal subunit protein uS19.